A 278-amino-acid chain; its full sequence is Ubiquinone biosynthesis protein COQ4, mitochondrial (278 aa).

The transit peptide at methionine 1 to phenylalanine 28 directs the protein to the mitochondrion. Zn(2+) contacts are provided by histidine 164, aspartate 165, histidine 168, and glutamate 180.

Belongs to the COQ4 family. In terms of assembly, component of a multi-subunit COQ enzyme complex, composed of at least COQ3, COQ4, COQ5, COQ6, COQ7 and COQ9. Zn(2+) is required as a cofactor.

Its subcellular location is the mitochondrion inner membrane. It catalyses the reaction a 4-hydroxy-3-methoxy-5-(all-trans-polyprenyl)benzoate + H(+) = a 2-methoxy-6-(all-trans-polyprenyl)phenol + CO2. It functions in the pathway cofactor biosynthesis; ubiquinone biosynthesis. Its function is as follows. Lyase that catalyzes the C1-decarboxylation of 4-hydroxy-3-methoxy-5-(all-trans-polyprenyl)benzoic acid into 2-methoxy-6-(all-trans-polyprenyl)phenol during ubiquinone biosynthesis. The polypeptide is Ubiquinone biosynthesis protein COQ4, mitochondrial (Uncinocarpus reesii (strain UAMH 1704)).